A 1545-amino-acid chain; its full sequence is ATP-binding cassette sub-family C member 2 (1545 aa).

The Extracellular segment spans residues 1–27 (MLEKFCNSTFWNSSFLDSPEADLPLCF). Asn7 and Asn12 each carry an N-linked (GlcNAc...) asparagine glycan. Residues 28-48 (EQTVLVWIPLGYLWLLAPWQL) traverse the membrane as a helical segment. The Cytoplasmic portion of the chain corresponds to 49-68 (LHVYKSRTKRSSTTKLYLAK). Residues 69 to 89 (QVFVGFLLILAAIELALVLTE) form a helical membrane-spanning segment. The Extracellular portion of the chain corresponds to 90 to 93 (DSGQ). A helical membrane pass occupies residues 94–114 (ATVPAVRYTNPSLYLGTWLLV). Residues 115-126 (LLIQYSRQWCVQ) lie on the Cytoplasmic side of the membrane. Residues 127–147 (KNSWFLSLFWILSILCGTFQF) traverse the membrane as a helical segment. Residues 148 to 165 (QTLIRTLLQGDNSNLAYS) are Extracellular-facing. A helical membrane pass occupies residues 166-186 (CLFFISYGFQILILIFSAFSE). The Cytoplasmic portion of the chain corresponds to 187 to 313 (NNESSNNPSS…DVPKSWLMKA (127 aa)). Residues 253 to 284 (ARRALQRRQEKSSQQNSGARLPGLNKNQSQSQ) form a disordered region. Residues Ser281 and Ser283 each carry the phosphoserine modification. A helical membrane pass occupies residues 314–334 (LFKTFYMVLLKSFLLKLVNDI). Residues 322 to 605 (LLKSFLLKLV…LPMMISSMLQ (284 aa)) form the ABC transmembrane type-1 1 domain. The Extracellular segment spans residues 335–360 (FTFVSPQLLKLLISFASDRDTYLWIG). Residues 361 to 381 (YLCAILLFTAALIQSFCLQCY) form a helical membrane-spanning segment. At 382-437 (FQLCFKLGVKVRTAIMASVYKKALTLSNLARKEYTVGETVNLMSVDAQKLMDVTNF) the chain is on the cytoplasmic side. The chain crosses the membrane as a helical span at residues 438–458 (MHMLWSSVLQIVLSIFFLWRE). The Extracellular segment spans residues 459-461 (LGP). The helical transmembrane segment at 462–482 (SVLAGVGVMVLVIPINAILST) threads the bilayer. Residues 483-544 (KSKTIQVKNM…NLLAFSQLQC (62 aa)) lie on the Cytoplasmic side of the membrane. Residues 545–565 (VVIFVFQLTPVLVSVVTFSVY) form a helical membrane-spanning segment. Over 566–587 (VLVDSNNILDAQKAFTSITLFN) the chain is Extracellular. A helical membrane pass occupies residues 588 to 608 (ILRFPLSMLPMMISSMLQASV). At 609–971 (STERLEKYLG…VKFSIYLEYL (363 aa)) the chain is on the cytoplasmic side. The 225-residue stretch at 637 to 861 (MQFSEASFTW…KGEFAKNLKT (225 aa)) folds into the ABC transporter 1 domain. 671 to 678 (GPVGSGKS) serves as a coordination point for ATP. 4 positions are modified to phosphoserine: Ser878, Ser926, Ser930, and Ser938. A helical membrane pass occupies residues 972 to 992 (QAIGLFSIFFIILAFVMNSVA). Residues 979–1264 (IFFIILAFVM…LVRMTSEIET (286 aa)) form the ABC transmembrane type-1 2 domain. Topologically, residues 993–1033 (FIGSNLWLSAWTSDSKIFNSTDYPASQRDMRVGVYGALGLA) are extracellular. Asn1011 carries an N-linked (GlcNAc...) asparagine glycan. The helical transmembrane segment at 1034 to 1054 (QGIFVFIAHFWSAFGFVHASN) threads the bilayer. Residues 1055–1097 (ILHKQLLNNILRAPMRFFDTTPTGRIVNRFAGDISTVDDTLPQ) are Cytoplasmic-facing. The helical transmembrane segment at 1098–1118 (SLRSWITCFLGIISTLVMICM) threads the bilayer. A topological domain (extracellular) is located at residue Ala1119. A helical membrane pass occupies residues 1120–1140 (TPVFTIIVIPLGIIYVSVQMF). Residues 1141-1211 (YVSTSRQLRR…TSNRWLAIRL (71 aa)) lie on the Cytoplasmic side of the membrane. A helical membrane pass occupies residues 1212–1232 (ELVGNLTVFFSALMMVIYRDT). Residues 1233 to 1234 (LS) lie on the Extracellular side of the membrane. Residues 1235–1255 (GDTVGFVLSNALNITQTLNWL) form a helical membrane-spanning segment. The Cytoplasmic segment spans residues 1256–1545 (VRMTSEIETN…GIENVNSTKF (290 aa)). The region spanning 1300–1534 (IQFNNYQVRY…PGPFYFMAKE (235 aa)) is the ABC transporter 2 domain. 1334–1341 (GRTGAGKS) is a binding site for ATP. Ser1438 carries the post-translational modification Phosphoserine.

Belongs to the ABC transporter superfamily. ABCC family. Conjugate transporter (TC 3.A.1.208) subfamily. Expressed by polarized cells in liver, kidney and intestine. The highest expression is found in liver. Expressed in small intestine.

It is found in the apical cell membrane. It catalyses the reaction ATP + H2O + xenobioticSide 1 = ADP + phosphate + xenobioticSide 2.. The catalysed reaction is an S-substituted glutathione(in) + ATP + H2O = an S-substituted glutathione(out) + ADP + phosphate + H(+). It carries out the reaction taurolithocholate 3-sulfate(in) + ATP + H2O = taurolithocholate 3-sulfate(out) + ADP + phosphate + H(+). The enzyme catalyses leukotriene C4(in) + ATP + H2O = leukotriene C4(out) + ADP + phosphate + H(+). It catalyses the reaction 17beta-estradiol 17-O-(beta-D-glucuronate)(in) + ATP + H2O = 17beta-estradiol 17-O-(beta-D-glucuronate)(out) + ADP + phosphate + H(+). The catalysed reaction is (4Z,15Z)-bilirubin IXalpha C8-beta-D-glucuronoside(in) + ATP + H2O = (4Z,15Z)-bilirubin IXalpha C8-beta-D-glucuronoside(out) + ADP + phosphate + H(+). It carries out the reaction (4Z,15Z)-bilirubin IXalpha C8,C12-beta-D-bisglucuronoside(in) + ATP + H2O = (4Z,15Z)-bilirubin IXalpha C8,C12-beta-D-bisglucuronoside(out) + ADP + phosphate + H(+). In terms of biological role, ATP-dependent transporter of the ATP-binding cassette (ABC) family that binds and hydrolyzes ATP to enable active transport of various substrates including many drugs, toxicants and endogenous compound across cell membranes. Transports a wide variety of conjugated organic anions such as sulfate-, glucuronide- and glutathione (GSH)-conjugates of endo- and xenobiotics substrates. Mediates hepatobiliary excretion of mono- and bis-glucuronidated bilirubin molecules and therefore play an important role in bilirubin detoxification. Also mediates hepatobiliary excretion of others glucuronide conjugates such as 17beta-estradiol 17-glucosiduronic acid and leukotriene C4. Transports sulfated bile salt such as taurolithocholate sulfate. Transports various anticancer drugs, such as anthracycline, vinca alkaloid and methotrexate and HIV-drugs such as protease inhibitors. Confers resistance to several anti-cancer drugs including cisplatin, doxorubicin, epirubicin, methotrexate, etoposide and vincristine. The sequence is that of ATP-binding cassette sub-family C member 2 from Homo sapiens (Human).